Reading from the N-terminus, the 132-residue chain is uncharacterized protein (132 aa).

Helical transmembrane passes span 28–48, 59–79, and 106–126; these read LLRLISLCIPIIRPFSFLIYP, ILPSILPIIPFAISSSLLFSY, and LLVASFVYLPYRSPLPVVIEI.

It localises to the membrane. This is an uncharacterized protein from Schizosaccharomyces pombe (strain 972 / ATCC 24843) (Fission yeast).